The primary structure comprises 426 residues: Glucose-1-phosphate adenylyltransferase (426 aa).

Alpha-D-glucose 1-phosphate contacts are provided by residues glycine 165, 180–181 (EK), and serine 191.

This sequence belongs to the bacterial/plant glucose-1-phosphate adenylyltransferase family. In terms of assembly, homotetramer.

It catalyses the reaction alpha-D-glucose 1-phosphate + ATP + H(+) = ADP-alpha-D-glucose + diphosphate. The protein operates within glycan biosynthesis; glycogen biosynthesis. Its function is as follows. Involved in the biosynthesis of ADP-glucose, a building block required for the elongation reactions to produce glycogen. Catalyzes the reaction between ATP and alpha-D-glucose 1-phosphate (G1P) to produce pyrophosphate and ADP-Glc. The chain is Glucose-1-phosphate adenylyltransferase from Ruminiclostridium cellulolyticum (strain ATCC 35319 / DSM 5812 / JCM 6584 / H10) (Clostridium cellulolyticum).